We begin with the raw amino-acid sequence, 1358 residues long: Phosphoinositide 3-kinase regulatory subunit 4 (1358 aa).

Glycine 2 carries the N-myristoyl glycine lipid modification. The 299-residue stretch at 26-324 folds into the Protein kinase domain; sequence FEYDKSLGST…AFPEIFYTFL (299 aa). ATP-binding positions include 32–40 and lysine 53; that span reads LGSTRFFKV. Residue aspartate 148 is the Proton acceptor of the active site. HEAT repeat units follow at residues 413–450, 458–495, 572–610, and 612–648; these read ILLD…LVQE, IYPE…TALR, KAND…YVGW, and SSSI…LGLL. Serine 808, serine 813, serine 853, and serine 865 each carry phosphoserine. 6 WD repeats span residues 991–1030, 1040–1079, 1093–1134, 1139–1178, 1182–1223, and 1237–1278; these read EHKS…GKTT, RIGG…LPKS, KEDG…NAWT, LKSG…PISS, PSRA…RRLT, and PSPH…RSYV. The tract at residues 1307–1326 is disordered; the sequence is KQKVGPSDDTPRRGPESLPV. The segment covering 1315 to 1326 has biased composition (basic and acidic residues); that stretch reads DTPRRGPESLPV. Threonine 1316 is subject to Phosphothreonine. The WD 7 repeat unit spans residues 1327 to 1358; sequence GHHDIITDIATFQTTQGFIVTASRDGIVKVWK.

This sequence belongs to the protein kinase superfamily. Ser/Thr protein kinase family. Component of the PI3K (PI3KC3/PI3K-III/class III phosphatidylinositol 3-kinase) complex the core of which is composed of the catalytic subunit PIK3C3, the regulatory subunit PIK3R4 and BECN1 associating with additional regulatory/auxiliary subunits to form alternative complex forms. Alternative complex forms containing a fourth regulatory subunit in a mutually exclusive manner are PI3K complex I (PI3KC3-C1) containing ATG14, and PI3K complex II (PI3KC3-C2) containing UVRAG. PI3KC3-C1 displays a V-shaped architecture with PIK3R4 serving as a bridge between PIK3C3 and the ATG14:BECN1 subcomplex. Both, PI3KC3-C1 and PI3KC3-C2, can associate with further regulatory subunits, such as RUBCN, SH3GLB1/Bif-1, AMBRA1 and NRBF2. PI3KC3-C1 probably associates with PIK3CB. Interacts with RAB7A in the presence of PIK3C3/VPS34. Interacts with NRBF2. Interacts with ARMC3. Mn(2+) serves as cofactor. In terms of processing, myristoylated. Probably autophosphorylated.

It localises to the late endosome. The protein resides in the cytoplasmic vesicle. The protein localises to the autophagosome. It is found in the membrane. The catalysed reaction is L-seryl-[protein] + ATP = O-phospho-L-seryl-[protein] + ADP + H(+). It catalyses the reaction L-threonyl-[protein] + ATP = O-phospho-L-threonyl-[protein] + ADP + H(+). Regulatory subunit of the PI3K complex that mediates formation of phosphatidylinositol 3-phosphate; different complex forms are believed to play a role in multiple membrane trafficking pathways: PI3KC3-C1 is involved in initiation of autophagosomes and PI3KC3-C2 in maturation of autophagosomes and endocytosis. Involved in regulation of degradative endocytic trafficking and cytokinesis, probably in the context of PI3KC3-C2. The protein is Phosphoinositide 3-kinase regulatory subunit 4 (Pik3r4) of Mus musculus (Mouse).